Consider the following 525-residue polypeptide: Nucleolar complex protein 4 homolog B (525 aa).

Over residues 1–10 (MAARKAKHAF) the composition is skewed to basic residues. Residues 1–21 (MAARKAKHAFRSQATQSDAER) are disordered. The next 3 membrane-spanning stretches (helical) occupy residues 307 to 327 (AAYD…FILI), 358 to 378 (FFHL…LVAA), and 386 to 406 (LALT…CNLI).

The protein belongs to the CBF/MAK21 family.

The protein resides in the nucleus membrane. Its subcellular location is the nucleus. It is found in the nucleolus. The polypeptide is Nucleolar complex protein 4 homolog B (noc4l-b) (Xenopus laevis (African clawed frog)).